The primary structure comprises 218 residues: 23 kDa integral membrane protein (218 aa).

The Cytoplasmic segment spans residues methionine 1–lysine 12. A helical membrane pass occupies residues serine 13–valine 36. Residues glutamate 37–proline 55 are Extracellular-facing. A helical membrane pass occupies residues isoleucine 56 to leucine 71. The Cytoplasmic portion of the chain corresponds to glycine 72–cysteine 82. A helical membrane pass occupies residues methionine 83–tyrosine 108. Residues lysine 109–asparagine 183 are Extracellular-facing. Residues leucine 184 to alanine 205 traverse the membrane as a helical segment. The Cytoplasmic portion of the chain corresponds to cysteine 206 to valine 218.

The protein belongs to the tetraspanin (TM4SF) family.

It localises to the membrane. The protein is 23 kDa integral membrane protein of Schistosoma japonicum (Blood fluke).